The primary structure comprises 500 residues: Perfringolysin O (500 aa).

A signal peptide spans 1–28 (MIRFKKTKLIASIAMALCLFSQPVISFS). 4 consecutive transmembrane segments (beta stranded) span residues 189–202 (KSQI…NAKV), 209–218 (VDFNAVANNE), 287–296 (SKDVQAAFKA), and 304–316 (KNSQ…YENS). A Conserved undecapeptide motif is present at residues 458–468 (ECTGLAWEWWR). The Cholesterol binding signature appears at 490 to 491 (TL).

Belongs to the cholesterol-dependent cytolysin family. In terms of assembly, modeling based on cryo-EM shows a homooligomeric pore complex containing 38-44 subunits; when inserted in the host membrane.

The protein resides in the secreted. It is found in the host cell membrane. Functionally, a cholesterol-dependent toxin that causes cytolysis by forming pores in cholesterol-containing host membranes. After binding to target membranes, the protein assembles into a pre-pore complex. A major conformational change leads to insertion in the host membrane and formation of an oligomeric pore complex. Cholesterol is required for binding to host cell membranes, membrane insertion and pore formation; cholesterol binding is mediated by a Thr-Leu pair in the C-terminus. Can be reversibly inactivated by oxidation. The chain is Perfringolysin O (pfo) from Clostridium perfringens (strain 13 / Type A).